Reading from the N-terminus, the 541-residue chain is Arginine--tRNA ligase (541 aa).

The short motif at 123-133 is the 'HIGH' region element; sequence ANPTGFLHIGH.

The protein belongs to the class-I aminoacyl-tRNA synthetase family. Monomer.

It is found in the cytoplasm. It carries out the reaction tRNA(Arg) + L-arginine + ATP = L-arginyl-tRNA(Arg) + AMP + diphosphate. The protein is Arginine--tRNA ligase of Metamycoplasma arthritidis (strain 158L3-1) (Mycoplasma arthritidis).